The sequence spans 72 residues: Translation initiation factor IF-1 (72 aa).

Positions 1 to 72 (MAKEESIEIE…SKGRITYRYK (72 aa)) constitute an S1-like domain.

The protein belongs to the IF-1 family. As to quaternary structure, component of the 30S ribosomal translation pre-initiation complex which assembles on the 30S ribosome in the order IF-2 and IF-3, IF-1 and N-formylmethionyl-tRNA(fMet); mRNA recruitment can occur at any time during PIC assembly.

It localises to the cytoplasm. Its function is as follows. One of the essential components for the initiation of protein synthesis. Stabilizes the binding of IF-2 and IF-3 on the 30S subunit to which N-formylmethionyl-tRNA(fMet) subsequently binds. Helps modulate mRNA selection, yielding the 30S pre-initiation complex (PIC). Upon addition of the 50S ribosomal subunit IF-1, IF-2 and IF-3 are released leaving the mature 70S translation initiation complex. The chain is Translation initiation factor IF-1 from Chlorobium phaeovibrioides (strain DSM 265 / 1930) (Prosthecochloris vibrioformis (strain DSM 265)).